Here is a 211-residue protein sequence, read N- to C-terminus: DNA-directed RNA polymerases I, II, and III subunit RPABC1 (211 aa).

Belongs to the archaeal Rpo5/eukaryotic RPB5 RNA polymerase subunit family. As to quaternary structure, component of the RNA polymerase I (Pol I), RNA polymerase II (Pol II) and RNA polymerase III (Pol III) complexes consisting of at least 13, 12 and 17 subunits, respectively. In RNA Pol II, this subunit is present in 2-fold molar excess over the other subunits.

Its subcellular location is the nucleus. Functionally, DNA-dependent RNA polymerase catalyzes the transcription of DNA into RNA using the four ribonucleoside triphosphates as substrates. Common component of RNA polymerases I, II and III which synthesize ribosomal RNA precursors, mRNA precursors and many functional non-coding RNAs, and small RNAs, such as 5S rRNA and tRNAs, respectively. Pol II is the central component of the basal RNA polymerase II transcription machinery. Pols are composed of mobile elements that move relative to each other. In Pol II, RPB5 is part of the lower jaw surrounding the central large cleft and thought to grab the incoming DNA template. Seems to be the major component in this process. The chain is DNA-directed RNA polymerases I, II, and III subunit RPABC1 (rpb-5) from Caenorhabditis elegans.